A 234-amino-acid polypeptide reads, in one-letter code: Interleukin-34 (234 aa).

The first 20 residues, 1 to 20 (MPQGLAWLRYLGILLGMALG), serve as a signal peptide directing secretion. N-linked (GlcNAc...) asparagine glycosylation is present at N76. The interval 191–234 (EAPQPQPRSPASAQCEAAQLYPLPQPPSTSLPRVLGPSAGPPTQ) is disordered.

This sequence belongs to the IL-34 family. Homodimer. Interacts with CSF1R.

The protein localises to the secreted. Its function is as follows. Cytokine that promotes the proliferation, survival and differentiation of monocytes and macrophages. Promotes the release of pro-inflammatory chemokines, and thereby plays an important role in innate immunity and in inflammatory processes. Plays an important role in the regulation of osteoclast proliferation and differentiation, and in the regulation of bone resorption. Signaling via CSF1R and its downstream effectors stimulates phosphorylation of MAPK1/ERK2 AND MAPK3/ERK1. The sequence is that of Interleukin-34 from Bos taurus (Bovine).